The chain runs to 295 residues: Small ribosomal subunit protein uS2 (295 aa).

Ser-2 carries the post-translational modification N-acetylserine. A Phosphoserine modification is found at Ser-43. An N6-acetyllysine modification is found at Lys-52. The tract at residues 54–113 (TWEKLLLAARAIVAIENPADVSVISSRNTGQRAVLKFAAATGATPIAGRFTPGTFTNQIQ) is interaction with PPP1R16B. Position 89 is an N6-acetyllysine; alternate (Lys-89). Lys-89 participates in a covalent cross-link: Glycyl lysine isopeptide (Lys-Gly) (interchain with G-Cter in SUMO2); alternate. A Phosphothreonine modification is found at Thr-97. Laminin-binding regions lie at residues 161-180 (IPCN…MLAR) and 205-229 (RDPE…EFQG). Over residues 214 to 227 (EQAAAEKAVTKEEF) the composition is skewed to basic and acidic residues. The segment at 214 to 240 (EQAAAEKAVTKEEFQGEWTAPAPEFTA) is disordered. 4 [DE]-W-[ST] repeats span residues 230-232 (EWT), 247-249 (DWS), 266-268 (DWS), and 275-277 (DWS). The interval 242–295 (QPEVADWSEGVQVPSVPIQQFPTEDWSARPFTEDWSAAPTAQATEWVGTTSELS) is laminin-binding. Residues 263–295 (PTEDWSARPFTEDWSAAPTAQATEWVGTTSELS) form a disordered region. Polar residues predominate over residues 280–295 (PTAQATEWVGTTSELS).

The protein belongs to the universal ribosomal protein uS2 family. As to quaternary structure, monomer (37LRP) and homodimer (67LR). Component of the small ribosomal subunit. Mature ribosomes consist of a small (40S) and a large (60S) subunit. The 40S subunit contains about 33 different proteins and 1 molecule of RNA (18S). The 60S subunit contains about 49 different proteins and 3 molecules of RNA (28S, 5.8S and 5S). Interacts with RPS21. Interacts with several laminins including at least LAMB1. Interacts with MDK. The mature dimeric form interacts with PPP1R16B (via its fourth ankyrin repeat). Interacts with PPP1CA only in the presence of PPP1R16B. In terms of processing, acylated. Acylation may be a prerequisite for conversion of the monomeric 37 kDa laminin receptor precursor (37LRP) to the mature dimeric 67 kDa laminin receptor (67LR), and may provide a mechanism for membrane association. Post-translationally, cleaved by stromelysin-3 (ST3) at the cell surface. Cleavage by stromelysin-3 may be a mechanism to alter cell-extracellular matrix interactions.

Its subcellular location is the cell membrane. It is found in the cytoplasm. The protein localises to the nucleus. Its function is as follows. Required for the assembly and/or stability of the 40S ribosomal subunit. Required for the processing of the 20S rRNA-precursor to mature 18S rRNA in a late step of the maturation of 40S ribosomal subunits. Also functions as a cell surface receptor for laminin. Plays a role in cell adhesion to the basement membrane and in the consequent activation of signaling transduction pathways. May play a role in cell fate determination and tissue morphogenesis. Also acts as a receptor for several other ligands, including the pathogenic prion protein, viruses, and bacteria. Acts as a PPP1R16B-dependent substrate of PPP1CA. This Ovis aries (Sheep) protein is Small ribosomal subunit protein uS2.